Reading from the N-terminus, the 298-residue chain is Keratin-associated protein 10-11 (298 aa).

25 repeat units span residues Cys26–Pro30, Cys36–Ala40, Cys57–Ala61, Cys79–Ser83, Cys89–Ser93, Cys99–Val103, Cys104–Val108, Cys109–Val113, Cys114–Val118, Cys119–Ala123, Cys126–Ser130, Cys136–Ser140, Cys146–Val150, Cys151–Val155, Cys156–Thr160, Cys168–Ser172, Cys178–Ser182, Cys188–Val192, Cys193–Val197, Cys203–Val207, Cys225–Ser229, Cys230–Ser234, Cys249–Val253, Cys256–Thr260, and Cys267–Ala271. The interval Cys26 to Ala271 is 25 X 5 AA repeats of C-C-X(3).

Belongs to the KRTAP type 10 family. As to quaternary structure, interacts with hair keratins. Restricted to a narrow region of the hair fiber cuticle, lying approximately 20 cell layers above the apex of the dermal papilla of the hair root; not detected in any other tissues.

Its function is as follows. In the hair cortex, hair keratin intermediate filaments are embedded in an interfilamentous matrix, consisting of hair keratin-associated proteins (KRTAP), which are essential for the formation of a rigid and resistant hair shaft through their extensive disulfide bond cross-linking with abundant cysteine residues of hair keratins. The matrix proteins include the high-sulfur and high-glycine-tyrosine keratins. This Homo sapiens (Human) protein is Keratin-associated protein 10-11 (KRTAP10-11).